A 78-amino-acid polypeptide reads, in one-letter code: Beta-defensin 12 (78 aa).

The signal sequence occupies residues 1 to 27 (MALSREVFYFGFALFFIVVELPSGSWA). Intrachain disulfides connect Cys46-Cys73, Cys53-Cys67, and Cys57-Cys74.

Belongs to the beta-defensin family. In terms of tissue distribution, only expressed in epididymis (caput, corpus and cauda).

The protein resides in the secreted. In terms of biological role, has antibacterial activity. This Mus musculus (Mouse) protein is Beta-defensin 12 (Defb12).